The chain runs to 386 residues: Alanine racemase 1 (386 aa).

Catalysis depends on K38, which acts as the Proton acceptor; specific for D-alanine. K38 is modified (N6-(pyridoxal phosphate)lysine). Substrate is bound at residue R136. Y267 serves as the catalytic Proton acceptor; specific for L-alanine. Substrate is bound at residue M315.

This sequence belongs to the alanine racemase family. Pyridoxal 5'-phosphate is required as a cofactor.

It carries out the reaction L-alanine = D-alanine. It participates in amino-acid biosynthesis; D-alanine biosynthesis; D-alanine from L-alanine: step 1/1. In terms of biological role, catalyzes the interconversion of L-alanine and D-alanine. May also act on other amino acids. This Clostridium acetobutylicum (strain ATCC 824 / DSM 792 / JCM 1419 / IAM 19013 / LMG 5710 / NBRC 13948 / NRRL B-527 / VKM B-1787 / 2291 / W) protein is Alanine racemase 1 (alr1).